Here is a 161-residue protein sequence, read N- to C-terminus: Nucleotide-binding protein Veis_3464 (161 aa).

The protein belongs to the YajQ family.

Nucleotide-binding protein. In Verminephrobacter eiseniae (strain EF01-2), this protein is Nucleotide-binding protein Veis_3464.